The following is a 1389-amino-acid chain: CRISPR-associated endoribonuclease Cas13a (1389 aa).

Positions 1-347 are NTD; sequence MGNLFGHKRW…DKHEKFKIER (347 aa). Residue Arg219 coordinates crRNA. Binds crRNA stretches follow at residues 330-342, 405-408, and 432-436; these read YIKSYVLLDKHEK, KKHY, and YRYLK. Positions 348 to 498 are helical-1; that stretch reads ENKKDKIVKF…KLRHNDIDMT (151 aa). Catalysis depends on for pre-crRNA processing residues Arg438 and Lys441. Lys441 is a crRNA binding site. A binds crRNA region spans residues 471-475; that stretch reads KILKR. Position 489 (Lys489) interacts with crRNA. The HEPN-like fold 1-I stretch occupies residues 499–636; that stretch reads TVNTDDFSRL…LKISDEEVSK (138 aa). The binds crRNA stretch occupies residues 502 to 509; the sequence is TDDFSRLH. Residues Arg597 and His602 each act as for target ssRNA cleavage in the active site. The tract at residues 637 to 828 is helical-2; that stretch reads ALNLDVVFKD…ERITVKTSDK (192 aa). Gln759 is a binding site for crRNA. The segment at 829–899 is HEPN-like fold 1-II; the sequence is TIVINDDFEY…ECITENWNLN (71 aa). The interval 853 to 858 is binds crRNA; the sequence is NKIRNR. Trp865 contacts crRNA. Coiled-coil stretches lie at residues 893–920, 968–1046, and 1101–1131; these read TENWNLNLEEFIQKMKEIEKDFDDFKIQ, EIDK…FQEI, and KNKISEIDAILKNLNDKLNGYSKEYKEKYIK. The interval 900–1170 is linker; it reads LEEFIQKMKE…EYKKIRDLVE (271 aa). The interval 1170–1290 is HEPN-like fold 2; sequence EFNYLNKIES…ISHFYIVRNP (121 aa). Active-site for target ssRNA cleavage residues include Arg1278 and His1283. 2 binds crRNA regions span residues 1311 to 1316 and 1338 to 1339; these read TRYNNS and KK.

Belongs to the CRISPR-associated endoribonuclease Cas13a family. Monomer. Requires Mg(2+) as cofactor.

Its activity is regulated as follows. RNase activity on target is decreased by EDTA. Target RNA acts as an activator for non-specific ssRNA degradation. CRISPR (clustered regularly interspaced short palindromic repeat), is an adaptive immune system that provides protection against mobile genetic elements (viruses, transposable elements and conjugative plasmids). CRISPR clusters contain sequences complementary to antecedent mobile elements (spacers) and target invading nucleic acids. Unlike many single-component effectors, this CRISPR-Cas system targets RNA. CRISPR clusters are transcribed from pre-CRISPR RNA (crRNA) and processed into crRNA (optimally 28 nucleotides in this system) by this protein. This protein processes pre-crRNA at a 'non-typical' site 1 nucleotide upstream of the pre-crRNA stem-loop; it cleaves pre-crRNA from L.buccalis and L.wadei in a similar fashion, whereas the enzymes from the latter 2 bacteria cleave their own pre-crRNA 3 nt further upstream. When the appropriate target sequences are cloned into the CRISPR array, confers immunity to ssRNA(+) enterobacteria phage MS2. Cleaves linear target ssRNA in a crRNA-dependent fashion, preferentially before U residues; has no activity on partially dsRNA, ssDNA or dsDNA. RNA secondary structure surrounding the target influence the cleavage site and efficiency; unlike other CRISPR-Cas effectors Cas13a cleaves outside of the crRNA binding site. In the presence of a viable RNA target other RNAs are also degraded (called collateral RNA degradation), suggesting this type of CRISPR-Cas might also prevent viral spread by inducing programmed cell death or dormancy. This system has a 3' protospacer flanking site (PFS), it does not cleave when the 3' PFS is G (PFS is equivalent to PAM, the protospacer adjacent motif). Mutations of its active site residues results in an RNA-programmed RNA-binding protein. The sequence is that of CRISPR-associated endoribonuclease Cas13a from Leptotrichia shahii (strain DSM 19757 / CCUG 47503 / CIP 107916 / JCM 16776 / LB37).